We begin with the raw amino-acid sequence, 1781 residues long: Atrochrysone carboxylic acid synthase (1781 aa).

The N-terminal acylcarrier protein transacylase domain (SAT) stretch occupies residues 15-253 (TRDLFRRLHV…KHVALPVYAG (239 aa)). The region spanning 390–823 (QSKIAIVGMA…GGNTSVVVEE (434 aa)) is the Ketosynthase family 3 (KS3) domain. Catalysis depends on for beta-ketoacyl synthase activity residues C563, H698, and H741. A malonyl-CoA:ACP transacylase (MAT) domain region spans residues 925-1244 (FAFTGQGASH…SLGLLHCAGL (320 aa)). The product template (PT) domain stretch occupies residues 1312–1631 (TSTVQQIIEE…RVLLNRFFSA (320 aa)). The N-terminal hotdog fold stretch occupies residues 1316–1451 (QQIIEETFSD…ADIVYGLPTD (136 aa)). Residues 1316 to 1626 (QQIIEETFSD…FRRYPRVLLN (311 aa)) enclose the PKS/mFAS DH domain. H1348 acts as the Proton acceptor; for dehydratase activity in catalysis. Positions 1478-1626 (IANRLSHNMA…FRRYPRVLLN (149 aa)) are C-terminal hotdog fold. D1537 functions as the Proton donor; for dehydratase activity in the catalytic mechanism. Residues 1633 to 1653 (DSDTSKHTSATDVSPPKKVVQ) form a disordered region. Positions 1703-1780 (VDSDSTASKA…DLKAWLMEYY (78 aa)) constitute a Carrier domain. Residue S1740 is modified to O-(pantetheine 4'-phosphoryl)serine.

It carries out the reaction holo-[ACP] + 8 malonyl-CoA + 8 H(+) = atrochrysone carboxyl-[ACP] + 8 CO2 + 8 CoA + 2 H2O. The protein operates within secondary metabolite biosynthesis. Atrochrysone carboxylic acid synthase; part of the gene cluster that mediates the biosynthesis of the dimeric xanthones cryptosporioptides. The pathway begins with the synthesis of atrochrysone thioester by the polyketide synthase dmx-nrPKS. The atrochrysone carboxyl ACP thioesterase dmxR1 then breaks the thioester bond and releases the atrochrysone carboxylic acid from dmx-nrPKS. Atrochrysone carboxylic acid is decarboxylated by the decarboxylase dmxR15, and oxidized by the anthrone oxygenase dmxR16 to yield emodin. Emodin is then reduced to emodin hydroquinone by the oxidoreductase dmxR7. A-ring reduction by the short chain dehydrogenase dmxR18, dehydration by the scytalone dehydratase-like protein dmxR17 and probable spontaneous re-oxidation, results in overall deoxygenation to chrysophanol. Baeyer-Villiger oxidation by the Baeyer-Villiger monooxygenase (BVMO) dmxR6 then yields monodictylactone in equilibrium with monodictyphenone. In the case of the cryptosporioptides biosynthesis, monodictylactone is reduced at C-12 to an alcohol (by the short chain dehydrogenases dmxR12 or dmxR8) and hydroxylated at C-5 by dmxR9, yielding the electron-rich aromatic which could eliminate H(2)O to form the ortho-quinonemethide, followed by tautomerisation to paraquinone and complete the formal reduction to produce the 10-methylgroup. Conjugate addition of C-4a-OH to the resulting paraquinone by the monooxygenase dmxR10 then gives cyclohexadienone, which is then reduced at C-5 by the short chain dehydrogenase dmxR3 to give the dihydroxanthone. The 6,7-epoxide in the cryptosporioptides could be introduced by the cytochrome P450 monooxygenase dmxL3. The highly reducing PKS dmxL2 manufactures butyrate, which is further carboxylated by dmxL1 to form ethylmalonate. It is not yet clear whether the carboxylation occurs while the butyrate is attached to the ACP of dmxL2, but this unusual fungal metabolite could then be esterified to O-5 by the O-acetyltransferase dmxR13. Finally, dimerization performed by dmxR5 gives the observed dimers cryptosporioptides A, B and C as the final products of the pathway. In Cryptosporiopsis sp. (strain 8999), this protein is Atrochrysone carboxylic acid synthase.